The sequence spans 1341 residues: DNA-directed RNA polymerase subunit beta (1341 aa).

This sequence belongs to the RNA polymerase beta chain family. The RNAP catalytic core consists of 2 alpha, 1 beta, 1 beta' and 1 omega subunit. When a sigma factor is associated with the core the holoenzyme is formed, which can initiate transcription.

It carries out the reaction RNA(n) + a ribonucleoside 5'-triphosphate = RNA(n+1) + diphosphate. Functionally, DNA-dependent RNA polymerase catalyzes the transcription of DNA into RNA using the four ribonucleoside triphosphates as substrates. This is DNA-directed RNA polymerase subunit beta from Pseudoalteromonas translucida (strain TAC 125).